Reading from the N-terminus, the 346-residue chain is Dimethyladenosine transferase 1, mitochondrial (346 aa).

A mitochondrion-targeting transit peptide spans 1–27 (MATQGVLAKYRLPPLPTIGEIIKLFNL). Residues Asn-36, Leu-38, Gly-63, Glu-85, Lys-86, Asp-111, Ile-112, and Asn-141 each coordinate S-adenosyl-L-methionine.

This sequence belongs to the class I-like SAM-binding methyltransferase superfamily. rRNA adenine N(6)-methyltransferase family. KsgA subfamily.

The protein resides in the mitochondrion. The catalysed reaction is adenosine(N)/adenosine(N+1) in rRNA + 4 S-adenosyl-L-methionine = N(6)-dimethyladenosine(N)/N(6)-dimethyladenosine(N+1) in rRNA + 4 S-adenosyl-L-homocysteine + 4 H(+). Mitochondrial methyltransferase which uses S-adenosyl methionine to dimethylate two highly conserved adjacent adenosine residues (A1583 and A1584) within the loop of helix 45 at the 3-prime end of 12S rRNA, thereby regulating the assembly or stability of the small subunit of the mitochondrial ribosome. Also required for basal transcription of mitochondrial DNA, probably via its interaction with POLRMT and TFAM. Stimulates transcription independently of the methyltransferase activity. The polypeptide is Dimethyladenosine transferase 1, mitochondrial (tfb1m) (Xenopus tropicalis (Western clawed frog)).